Reading from the N-terminus, the 349-residue chain is GATA zinc finger domain-containing protein 24 (349 aa).

Composition is skewed to low complexity over residues 95–169 (NINR…VNKN) and 177–195 (NKSC…NNNS). Disordered regions lie at residues 95–227 (NINR…PVIK) and 250–294 (DYDY…KPVQ). Residues 196–212 (ENKEKNNINNNNEKENN) are compositionally biased toward basic and acidic residues. Low complexity predominate over residues 257 to 272 (SNESSSPTLSASTLSS). A compositionally biased stretch (basic residues) spans 278–289 (KVLKRGRGRPSK). The GATA-type zinc finger occupies 295–323 (CFSCFRSNTPEWRKGKDKDGNVIDLCNAC).

The polypeptide is GATA zinc finger domain-containing protein 24 (gtaX) (Dictyostelium discoideum (Social amoeba)).